Here is a 93-residue protein sequence, read N- to C-terminus: Co-chaperonin GroES (93 aa).

The protein belongs to the GroES chaperonin family. In terms of assembly, heptamer of 7 subunits arranged in a ring. Interacts with the chaperonin GroEL.

Its subcellular location is the cytoplasm. In terms of biological role, together with the chaperonin GroEL, plays an essential role in assisting protein folding. The GroEL-GroES system forms a nano-cage that allows encapsulation of the non-native substrate proteins and provides a physical environment optimized to promote and accelerate protein folding. GroES binds to the apical surface of the GroEL ring, thereby capping the opening of the GroEL channel. The protein is Co-chaperonin GroES of Streptococcus anginosus.